A 421-amino-acid chain; its full sequence is MLYPEYPEYDNFNESGALIKVVGVGGGGGNAVNHMVMNMVKQEMGGTFVGESSLTSEEHGRIVFYAVNTDAQALRKSQVQQTVQIGGETTKGLGAGANPNIGRKAAEDDQDEIRKMLEGADMVFIAAGMGGGTGTGAAPVVAKIAKELGILTVAVVTKPFTFEGKKRMQFAELGIKDLSQYVDSMIIIPNQQIQKVLPKNAKLIDAFAAANDVLRNSVMGISDMITSPGLINVDFADVRTVMSVQGQAMIGFGSAVGEPGAGRAEEAARLAVRNDLLEKIDLSNAQGILVNITAGMDLVFEEFNIIGETIGSFASEEATVVVGTSLVPEMSDEIRVTIVATGLGEIAGNEPIQVVRQGLSTQNIEGEGRVNIVPELHRRESVEVSRTASEEYQRPLDKPITDRLEAFKKNNFFNPAQREEN.

GTP contacts are provided by residues 26–30, 132–134, glutamate 163, arginine 167, and asparagine 211; these read GGGGN and GTG.

This sequence belongs to the FtsZ family. Homodimer. Polymerizes to form a dynamic ring structure in a strictly GTP-dependent manner. Interacts directly with several other division proteins.

It is found in the cytoplasm. Its function is as follows. Essential cell division protein that forms a contractile ring structure (Z ring) at the future cell division site. The regulation of the ring assembly controls the timing and the location of cell division. One of the functions of the FtsZ ring is to recruit other cell division proteins to the septum to produce a new cell wall between the dividing cells. Binds GTP and shows GTPase activity. This Haemophilus influenzae (strain ATCC 51907 / DSM 11121 / KW20 / Rd) protein is Cell division protein FtsZ.